Reading from the N-terminus, the 319-residue chain is Acetyl-coenzyme A carboxylase carboxyl transferase subunit alpha (319 aa).

In terms of domain architecture, CoA carboxyltransferase C-terminal spans 35–296; that stretch reads NIDEEVHRLR…KAQLLADLAD (262 aa).

This sequence belongs to the AccA family. In terms of assembly, acetyl-CoA carboxylase is a heterohexamer composed of biotin carboxyl carrier protein (AccB), biotin carboxylase (AccC) and two subunits each of ACCase subunit alpha (AccA) and ACCase subunit beta (AccD).

The protein resides in the cytoplasm. It catalyses the reaction N(6)-carboxybiotinyl-L-lysyl-[protein] + acetyl-CoA = N(6)-biotinyl-L-lysyl-[protein] + malonyl-CoA. Its pathway is lipid metabolism; malonyl-CoA biosynthesis; malonyl-CoA from acetyl-CoA: step 1/1. Functionally, component of the acetyl coenzyme A carboxylase (ACC) complex. First, biotin carboxylase catalyzes the carboxylation of biotin on its carrier protein (BCCP) and then the CO(2) group is transferred by the carboxyltransferase to acetyl-CoA to form malonyl-CoA. The sequence is that of Acetyl-coenzyme A carboxylase carboxyl transferase subunit alpha from Shigella boydii serotype 4 (strain Sb227).